The chain runs to 384 residues: GTPase Obg (384 aa).

In terms of domain architecture, Obg spans 1 to 159; it reads MKFIDEAKIE…RSLQLELKVL (159 aa). A disordered region spans residues 20–46; it reads ATSFRREKFVPRGGPDGGDGGKGGSVW. A compositionally biased stretch (gly residues) spans 33 to 43; sequence GPDGGDGGKGG. The OBG-type G domain maps to 160–348; the sequence is ADVGLLGMPN…LVHQINQYLT (189 aa). Residues 166–173, 191–195, 213–216, 284–287, and 329–331 each bind GTP; these read GMPNAGKS, FTTLH, DIPG, NKLD, and SAL. Residues serine 173 and threonine 193 each coordinate Mg(2+).

This sequence belongs to the TRAFAC class OBG-HflX-like GTPase superfamily. OBG GTPase family. As to quaternary structure, monomer. The cofactor is Mg(2+).

It is found in the cytoplasm. An essential GTPase which binds GTP, GDP and possibly (p)ppGpp with moderate affinity, with high nucleotide exchange rates and a fairly low GTP hydrolysis rate. Plays a role in control of the cell cycle, stress response, ribosome biogenesis and in those bacteria that undergo differentiation, in morphogenesis control. The chain is GTPase Obg from Neisseria meningitidis serogroup C (strain 053442).